A 1400-amino-acid chain; its full sequence is MMLSRPKPGESEVDLLRFQSQFLEAGAAPAVQLVKGSRRRGDAHPDQLPPQDHRDVVMLDSLPDLPPALLPAPSKRARPSPGRPLPHDEDPEERLNRHDEHITAVLSKIVERDTSSVTVTLPVPSGVAFPPVFHRSQERQVKPAASSKRSIFAQEIAARRVSDNRAPSAEQVVPSPDAPEGAVPCETPSSKDRGSQLPGRSHSFHRPNLITGKGLRSQAAVQEVQTIHEENVARLQAMDPEEILKEQQQLLAQLDPSLVAFLRAHNHTREQTETKATKEQNPERPSVPVSKEEPIMSTCTGESGTRDKLEDKLEDKLQPRTPALKLPMTPNKEWLHMDTVELEKLHWTQDLPPLRRQQTQERMQARFSLQGELLEPDVDLPTHLGLHHHGEEAERAGYSLQELFHLTRSQVSQQRALALHVLSHIVGRAQAGEFGDRLVGSVLRLLLDAGFLFLLRFSLDDRIDSVIAAAVRALRALLVAPGDEELLDSTFSWYHGASVFPMMPSHDDKEDEDEDEELTKEKVNRKTPEEGSRPPPDLARHDVIKGLLATNLLPRFRYVLEVTCPGPSVVLDILAVLIRLARHSLESAMRVLECPRLMETIVREFLPTSWSPIGVGPAPSLYKVPCAAAMKLLRVLASAGRNIAARLLSSFDVRSRLCRFIAEAPRDLALPFEEAEILTTEAFRLWAVAASYGQGGDLYRELYPVLMRALQTLPPELSTHPLQPLSMQRMASLLTLLTQLTLAASTQPEATSGSVESCVVAIPSSITWTHVSGLKPLVEPCLKQTLKFLRRPDVWNALGPVPSACLLFLGAYYQTWSQQSGLCPEDWLQDMERFLDEFLLPLLSQPPLGRMWDSLRDCSPLCNPLSCASTPEALPSLVSLGCAGGCPPLSVAGSASPFPFLTALLSLINTLGQIHKGLCRQLAVVLTAPGLQNYFLQCVAPAPAPQLTPFSAWALRHEYHLQYLVLSLAQKAATSQPEPAASTALHHVMALVLLSRLLPGSEFLAHELLLSCVFRLGFLPENASGGPEAADFSDGLSLGNSGDPHCRRGALLVQACQDLPSIRSCYLAHCSPARASLLTSQALYRGELPRVSSLLLPVPKEPLLPTDWPFQPLIHLYHRASDTPSGLPAADTVGITMRVLQWVLVLESWRPEALWAVPPAARLARLMCVYLVDSELFRETPIQRLVAALLARLCQPQVLPNLKLDCPLPGLTSFPDLYASFLDHFEAVSFGDHLFGALVLLPLQRRFSVTLRLALFGEHVGVLRALGLPLAQLPVPLECYTEPAEDSLALLQLYFRALVTGALHARWCPVLYTVAVAHVNSFVFCQDPKSSDEVKAARRSMLQKVWLLADKDLRQHLLHYKLPNSSLPEGFELYPQLPRLRQQYLQTLPTEVLQNGGFKT.

4 disordered regions span residues 35-54, 60-95, 161-215, and 269-310; these read KGSR…QDHR, DSLP…EERL, VSDN…GKGL, and REQT…DKLE. Composition is skewed to basic and acidic residues over residues 39–54 and 85–95; these read RRGD…QDHR and LPHDEDPEERL. Positions 269-282 are enriched in basic and acidic residues; it reads REQTETKATKEQNP. Position 329 is a phosphothreonine (Thr-329). The disordered stretch occupies residues 504–539; the sequence is PSHDDKEDEDEDEELTKEKVNRKTPEEGSRPPPDLA. Positions 509–518 are enriched in acidic residues; the sequence is KEDEDEDEEL. The span at 519–539 shows a compositional bias: basic and acidic residues; the sequence is TKEKVNRKTPEEGSRPPPDLA.

Belongs to the RPAP1 family. In terms of assembly, part of an RNA polymerase II complex that contains POLR2A, POLR2B, POLR2C, POLR2D, POLR2E, POLR2F, POLR2G, POLR2H, POLR2I, POLR2J, POLR2K, POLR2L, RPAP1, FCP1 plus the general transcription factors TFIIB and TFIIF.

The protein localises to the nucleus. In terms of biological role, forms an interface between the RNA polymerase II enzyme and chaperone/scaffolding protein, suggesting that it is required to connect RNA polymerase II to regulators of protein complex formation. Required for interaction of the RNA polymerase II complex with acetylated histone H3. The polypeptide is RNA polymerase II-associated protein 1 (Rpap1) (Rattus norvegicus (Rat)).